We begin with the raw amino-acid sequence, 260 residues long: Uroplakin-1b (260 aa).

Residues 1-15 (MAKDDSTVRCFQGLL) lie on the Cytoplasmic side of the membrane. A helical membrane pass occupies residues 16–36 (IFGHVIVGMCGIALTAECIFF). Residues 37-59 (VSDQHSLYPLLEATNNDDIFGAA) are Extracellular-facing. The chain crosses the membrane as a helical span at residues 60 to 80 (WIGMFVGICLFCLSVLAIVGI). Residues 81-86 (MKSNRK) are Cytoplasmic-facing. Residues 87 to 107 (ILLAYFIMMFIVYGFEVASCI) traverse the membrane as a helical segment. Topologically, residues 108-229 (TAATQRDFFT…ELISGPMDRH (122 aa)) are extracellular. Residues 230 to 250 (AWGVAWFGFAILCWTFWVLLG) form a helical membrane-spanning segment. The Cytoplasmic portion of the chain corresponds to 251-260 (TMFYWSRIEY).

Belongs to the tetraspanin (TM4SF) family. In terms of assembly, heterodimer with uroplakin-3A (UPK3A) or uroplakin-3B (UPK3B). In terms of processing, N-glycosylated with high-mannose oligosaccharides. Bladder epithelium.

Its subcellular location is the membrane. Component of the asymmetric unit membrane (AUM); a highly specialized biomembrane elaborated by terminally differentiated urothelial cells. May play an important role in normal bladder epithelial physiology, possibly in regulating membrane permeability of superficial umbrella cells or in stabilizing the apical membrane through AUM/cytoskeletal interactions. This Mus musculus (Mouse) protein is Uroplakin-1b (Upk1b).